We begin with the raw amino-acid sequence, 313 residues long: Flagellin (313 aa).

2 coiled-coil regions span residues 5–33 (INTN…ERLS) and 97–117 (VQSE…KEVT). 4 repeat units span residues 179–197 (KEAV…VPAD), 199–217 (KNGV…VKAQ), 255–259 (VNNLN), and 262–266 (VNNLS). The interval 179 to 217 (KEAVAAKPAVPAQPAVPADPKNGVAAKPAVPAQPEVKAQ) is 2 X 19 AA approximate tandem repeats. The span at 190–199 (AQPAVPADPK) shows a compositional bias: low complexity. The segment at 190 to 211 (AQPAVPADPKNGVAAKPAVPAQ) is disordered. The stretch at 252-298 (ESTVNNLNNTVNNLSAARSRIEDADYAVEVSNMSRGQILQQAGTSVL) forms a coiled coil. Residues 255–266 (VNNLNNTVNNLS) are 2 X 5 AA approximate repeats of V-N-N-L-N.

The protein belongs to the bacterial flagellin family.

The protein resides in the secreted. It is found in the bacterial flagellum. Functionally, flagellin is the subunit protein which polymerizes to form the filaments of bacterial flagella. The chain is Flagellin (fliC) from Xenorhabdus nematophila (Achromobacter nematophilus).